The sequence spans 177 residues: Ubiquinol-cytochrome c reductase iron-sulfur subunit (177 aa).

Residues 18–38 (MVLTASSVAAIGAVCTLWPLV) form a helical membrane-spanning segment. Residues 88–175 (ARAVKMSELI…YTFISDKKIR (88 aa)) form the Rieske domain. C120, H122, C139, and H142 together coordinate [2Fe-2S] cluster. A disulfide bond links C125 and C141.

The protein belongs to the Rieske iron-sulfur protein family. In terms of assembly, the main subunits of complex b-c1 are: cytochrome b, cytochrome c1 and the Rieske protein. It depends on [2Fe-2S] cluster as a cofactor.

The protein localises to the cell membrane. It carries out the reaction a quinol + 2 Fe(III)-[cytochrome c](out) = a quinone + 2 Fe(II)-[cytochrome c](out) + 2 H(+)(out). Functionally, component of the ubiquinol-cytochrome c reductase complex (complex III or cytochrome b-c1 complex), which is a respiratory chain that generates an electrochemical potential coupled to ATP synthesis. In Rickettsia conorii (strain ATCC VR-613 / Malish 7), this protein is Ubiquinol-cytochrome c reductase iron-sulfur subunit (petA).